Here is a 131-residue protein sequence, read N- to C-terminus: Predicted GPI-anchored protein 26 (131 aa).

An N-terminal signal peptide occupies residues 1 to 18 (MHFSKIIAGSALSSVALA). N-linked (GlcNAc...) asparagine glycans are attached at residues Asn22 and Asn104. Gly110 is lipidated: GPI-anchor amidated glycine. Positions 111–131 (AGSKNVASALVGVVAIAAAMM) are cleaved as a propeptide — removed in mature form.

The protein resides in the cell membrane. Functionally, GPI-anchored protein involved in proper cell wall integrity. Does not seem to be directly involved in the synthesis of the cell wall. Required for normal virulence in a mouse model of disseminated candidiasis. The sequence is that of Predicted GPI-anchored protein 26 (PGA26) from Candida albicans (strain SC5314 / ATCC MYA-2876) (Yeast).